Here is a 213-residue protein sequence, read N- to C-terminus: Pyrrolidone-carboxylate peptidase (213 aa).

Residues glutamate 78, cysteine 141, and histidine 165 contribute to the active site.

This sequence belongs to the peptidase C15 family. In terms of assembly, homotetramer.

Its subcellular location is the cytoplasm. The catalysed reaction is Release of an N-terminal pyroglutamyl group from a polypeptide, the second amino acid generally not being Pro.. Its function is as follows. Removes 5-oxoproline from various penultimate amino acid residues except L-proline. The polypeptide is Pyrrolidone-carboxylate peptidase (Alkaliphilus oremlandii (strain OhILAs) (Clostridium oremlandii (strain OhILAs))).